We begin with the raw amino-acid sequence, 287 residues long: Pyridoxal kinase PdxY (287 aa).

Substrate is bound by residues Ser10 and 45–46 (TQ). ATP is bound by residues Asp112, Ala144, Glu149, Lys182, and 209 to 212 (RPLV). A substrate-binding site is contributed by Asp224.

This sequence belongs to the pyridoxine kinase family. PdxY subfamily. Homodimer. The cofactor is Mg(2+).

It catalyses the reaction pyridoxal + ATP = pyridoxal 5'-phosphate + ADP + H(+). It participates in cofactor metabolism; pyridoxal 5'-phosphate salvage; pyridoxal 5'-phosphate from pyridoxal: step 1/1. In terms of biological role, pyridoxal kinase involved in the salvage pathway of pyridoxal 5'-phosphate (PLP). Catalyzes the phosphorylation of pyridoxal to PLP. This chain is Pyridoxal kinase PdxY, found in Escherichia coli (strain UTI89 / UPEC).